A 666-amino-acid polypeptide reads, in one-letter code: MSELNPVDNQKVDSINVDKSSPELKKHTFEAEVAQLLHLVTHSLYSNSDIFVRELVSNASDACDKLRFEATNDDSLYEDDGELKIRIAVDEDAKTITFTDNGIGMNEADAIENLGTIAKSGTKAFLDKLSESQKQDGQLIGQFGVGFYSGFIVADTISVETRKAGEPADKGVRWVSDGTGSFTVEPITKETRGTAITLHLKEQYSEGEESYLDRGKIKQLVNKYSDHISLPIQMRKEVWQEDEVEEGSDTPANGQMVLTDEWETINKASALWTRSASEIEDEEYIDFYKNITYDMDAPLAWTHNRVEGRVQYTQLLYIPKKAPVDLYTREQQHGLKLYVKRVFIMDEAEQLLPMYLRFVKGVIDSADLPLNVSRELLQESRDVKSIRDGNARRILTLLASLANSEDSDKQEKFAQFYAEFGDVIKEGVGEDMGNQERIAKLLRYATSTQDSVTTSFEDYKARMKEGQKAIYYLTADNLAAAKNSPQLELFKKKGIEVILMTSRVDEWAMNFLTSFDETPLQNIAKGAVDLGDLQDEAEKAEAEKAQETMKPIVDKLKTALGERAKDVKVSTRLVDSPACLVVGEGELSPQMIQMLKQMGQDVPESKPTLEVNPDHPLIKKLESSEQSAEDFDKLAQVIFDQALLADGGQLDDPAAYLRRVNELLMR.

Positions 1 to 374 are a; substrate-binding; it reads MSELNPVDNQ…SADLPLNVSR (374 aa). Residues 375–593 are b; it reads ELLQESRDVK…EGELSPQMIQ (219 aa). The segment at 594 to 666 is c; the sequence is MLKQMGQDVP…LRRVNELLMR (73 aa).

It belongs to the heat shock protein 90 family. Homodimer.

It localises to the cytoplasm. Its function is as follows. Molecular chaperone. Has ATPase activity. The polypeptide is Chaperone protein HtpG (Psychrobacter cryohalolentis (strain ATCC BAA-1226 / DSM 17306 / VKM B-2378 / K5)).